Consider the following 628-residue polypeptide: MMKRCFSILPQNVRFSSKFTSLNLPKLDLADFIDSNKRGINVLPSYRDETASTTQATNSKELRLLSKTLQGQSYRDQLELNPDVSKAINNNIMAVHIPNNLRRVATNYYKEIQEPNSLHRPCRTKMEVDAHIASIFLQNYGSIFQSLKELQKRVGPDNFKPQRILDVGYGPATGIVALNDILGPNYRPDLKDAVILGNAEMQERAKIILSRQLNEVVDTVEENVSTEKEQETDRRNKNFQEDEHIGEVMTKKINIMTNLRSSIPASKEYDLIILTHQLLHDGNQFPIQVDENIEHYLNILAPGGHIVIIERGNPMGFEIIARARQITLRPENFPDEFGKIPRPWSRGVTVRGKKDAELGNISSNYFLKVIAPCPHQRKCPLQVGNPNFYTHKEGKDLKFCNFQKSIKRPKFSIELKKGKLLATSWDGSQGNASRLKGTGRRNGRDYEILNYSYLIFERSHKDENTLKEIKKLRNENVNGKYDIGSLGDDTQNSWPRIINDPVKRKGHVMMDLCAPSGELEKWTVSRSFSKQIYHDARKSKKGDLWASAAKTQIKGLGDLNVKKFHKLEKERIKQLKKEERQKARKAMESYNELEDSLQFDDHQFSNFEVMKKLSTFHGNDFLQHVNRK.

The transit peptide at Met1–Phe15 directs the protein to the mitochondrion. The [4Fe-4S] cluster site is built by Cys373, Cys379, Cys400, and Cys513.

It belongs to the methyltransferase superfamily. Rsm22 family. Associates with the mitochondrial ribosome (mitoribosome). Only transiently interacts with the mitoribosome.

Its subcellular location is the mitochondrion. Mitochondrial ribosome (mitoribosome) assembly factor. Binds at the interface of the head and body domains of the mitochondrial small ribosomal subunit (mt-SSU), occluding the mRNA channel and preventing compaction of the head domain towards the body. Probable inactive methyltransferase: retains the characteristic folding and ability to bind S-adenosyl-L-methionine, but it probably lost its methyltransferase activity. This chain is Ribosome assembly protein RSM22, mitochondrial (RSM22), found in Saccharomyces cerevisiae (strain ATCC 204508 / S288c) (Baker's yeast).